A 533-amino-acid chain; its full sequence is E3 ubiquitin-protein ligase arih1l (533 aa).

Disordered regions lie at residues 1 to 35 (MDSD…EAVD) and 48 to 73 (PAVA…QEDE). The segment at 158 to 369 (QDLPCQICYL…SAWYNCNRYN (212 aa)) is TRIAD supradomain. Positions 162, 165, 179, 181, 184, 187, 207, 212, 252, 257, 273, 275, 280, 283, 288, 293, 320, and 323 each coordinate Zn(2+). Residues 162 to 212 (CQICYLNYPNSYFTGLECGHKFCMQCWGDYLTTKIIEEGMGQTISCPAHNC) form an RING-type 1 zinc finger. The IBR-type zinc-finger motif lies at 232-293 (LKYQHLITNS…GENWHDPVKC (62 aa)). The RING-type 2; atypical zinc-finger motif lies at 320 to 351 (CPKCHVTIEKDGGCNHMVCRNQNCKAEFCWVC). The active site involves Cys333. Positions 338, 343, 348, 351, 358, and 365 each coordinate Zn(2+). Residues 409–425 (KLYAQVKQKMEEMQQHN) are a coiled coil.

This sequence belongs to the RBR family. Ariadne subfamily.

It is found in the cytoplasm. The catalysed reaction is [E2 ubiquitin-conjugating enzyme]-S-ubiquitinyl-L-cysteine + [acceptor protein]-L-lysine = [E2 ubiquitin-conjugating enzyme]-L-cysteine + [acceptor protein]-N(6)-ubiquitinyl-L-lysine.. Its pathway is protein modification; protein ubiquitination. Functionally, E3 ubiquitin-protein ligase, which catalyzes polyubiquitination of target proteins together with ubiquitin-conjugating enzyme E2 ube2l3. The chain is E3 ubiquitin-protein ligase arih1l (arih1l) from Danio rerio (Zebrafish).